The primary structure comprises 443 residues: Threonine/serine transporter TdcC (443 aa).

Helical transmembrane passes span 24–44, 45–65, 95–115, 140–160, 163–183, 207–227, 259–279, 319–339, 363–383, 385–405, and 423–443; these read WVLGLFGTAIGAGVLFFPISA, GIGGLLPIIFMLILAFPIAFF, VGGVVITFLYFFAICPLLWIY, VVALAILLVMAFFIYFGKDLM, VMGYLVFPFITCLVLISLSLI, ILVTVWLGIAIMVFSFNFSPI, ASVLMVVVVMFFAFSCLFTLS, ASIIALVAIFKSFFGHYLGTL, LNMISMVIIMGSTWVIAYINP, ILDLIGAMGAPIIAALLCLLP, and SNYFVTIIGLLTILNIVYQLM.

Belongs to the amino acid/polyamine transporter 2 family. SdaC/TdcC subfamily.

The protein localises to the cell inner membrane. The catalysed reaction is L-threonine(in) + H(+)(in) = L-threonine(out) + H(+)(out). It carries out the reaction L-serine(in) + H(+)(in) = L-serine(out) + H(+)(out). Functionally, involved in the import of threonine and serine into the cell, with the concomitant import of a proton (symport system). This chain is Threonine/serine transporter TdcC, found in Edwardsiella piscicida.